A 289-amino-acid chain; its full sequence is MGRPPCCDKAGVKKGPWTPEEDIVLVSYVQEHGPGNWRAVPVSTGLMRCSKSCRLRWTNYLRPGIRRGNFTPHEEGIIVHLQALLGNRWAAIASYLPQRTDNDIKNYWNTHLKKKLRKQQAIGAIFAPPRPSEPTAGHADCRRHDMTRSSKDSHAACPADSTPAADEVVTQLIAQQFAATDGDTSSSSSYSYASSTDNISKLLNGFMMKSASPARDDATDTIKTSSAIDIDPFDHKSGGAALPPPKKRQQQQHLSSIENWLFDDATEQLVVQLMEEISGGSCSVPMLLY.

2 HTH myb-type domains span residues 9-61 (KAGV…TNYL) and 62-116 (RPGI…KKKL). DNA-binding regions (H-T-H motif) lie at residues 37–61 (WRAV…TNYL) and 89–112 (WAAI…NTHL). Disordered regions lie at residues 127-162 (APPR…ADST) and 225-252 (SSAI…QQQQ). Positions 139–154 (ADCRRHDMTRSSKDSH) are enriched in basic and acidic residues.

In terms of tissue distribution, mainly expressed in highly lignified tissues such as vascular tissues.

The protein resides in the nucleus. Transcription factor that binds to the promoter of MYB31 and MYB42 and activates directly their expression, thus repressing lignin biosynthesis. This is MYB transcription factor 69 from Zea mays (Maize).